A 348-amino-acid chain; its full sequence is Dihydroorotase (348 aa).

Positions 17 and 19 each coordinate Zn(2+). Substrate-binding positions include 19 to 21 and N45; that span reads HLR. Zn(2+) is bound by residues K103, H140, and H178. K103 bears the N6-carboxylysine mark. H140 contributes to the substrate binding site. Position 223 (L223) interacts with substrate. Zn(2+) is bound at residue D251. D251 is an active-site residue. Substrate is bound by residues H255 and A267.

The protein belongs to the metallo-dependent hydrolases superfamily. DHOase family. Class II DHOase subfamily. Homodimer. Requires Zn(2+) as cofactor.

It catalyses the reaction (S)-dihydroorotate + H2O = N-carbamoyl-L-aspartate + H(+). It functions in the pathway pyrimidine metabolism; UMP biosynthesis via de novo pathway; (S)-dihydroorotate from bicarbonate: step 3/3. In terms of biological role, catalyzes the reversible cyclization of carbamoyl aspartate to dihydroorotate. The protein is Dihydroorotase of Shigella flexneri.